Here is a 749-residue protein sequence, read N- to C-terminus: Cytosolic phospholipase A2 (749 aa).

A phospholipid binding region spans residues 1 to 178 (MSFIDPYQHI…MKKLLGPKKS (178 aa)). S2 carries the post-translational modification Phosphoserine. One can recognise a C2 domain in the interval 6-122 (PYQHIIVEHQ…KVGEKKEVPF (117 aa)). 7 residues coordinate Ca(2+): D40, T41, D43, N65, D93, A94, and N95. One can recognise a PLA2c domain in the interval 140-740 (SCPDLRFSMA…SNVEARRFFN (601 aa)). S228 functions as the Nucleophile in the catalytic mechanism. The residue at position 268 (T268) is a Phosphothreonine. Residues 427–456 (KHIVSNDSSDSDDESQEPKGTENEDAERDY) form a disordered region. Phosphoserine is present on residues S434, S435, and S437. S505 is subject to Phosphoserine; by MAPK. S515 is modified (phosphoserine). K541 participates in a covalent cross-link: Glycyl lysine isopeptide (Lys-Gly) (interchain with G-Cter in SUMO2). Residue D549 is the Proton acceptor of the active site. K606 is covalently cross-linked (Glycyl lysine isopeptide (Lys-Gly) (interchain with G-Cter in SUMO2)). A phosphoserine mark is found at S727 and S729.

Interacts with KAT5. Post-translationally, phosphorylated at both Ser-505 and Ser-727 in response to mitogenic stimuli.

It is found in the cytoplasm. The protein resides in the golgi apparatus membrane. The protein localises to the nucleus envelope. It carries out the reaction a 1,2-diacyl-sn-glycero-3-phosphocholine + H2O = a 1-acyl-sn-glycero-3-phosphocholine + a fatty acid + H(+). The enzyme catalyses a 1-O-alkyl-2-acyl-sn-glycero-3-phosphocholine + H2O = a 1-O-alkyl-sn-glycero-3-phosphocholine + a fatty acid + H(+). The catalysed reaction is a 1-acyl-sn-glycero-3-phosphocholine + H2O = sn-glycerol 3-phosphocholine + a fatty acid + H(+). It catalyses the reaction 1-hexadecanoyl-2-(5Z,8Z,11Z,14Z-eicosatetraenoyl)-sn-glycero-3-phosphocholine + H2O = 1-hexadecanoyl-sn-glycero-3-phosphocholine + (5Z,8Z,11Z,14Z)-eicosatetraenoate + H(+). It carries out the reaction 1,2-di-(5Z,8Z,11Z,14Z-eicosatetraenoyl)-sn-glycero-3-phosphocholine + H2O = 1-(5Z,8Z,11Z,14Z-eicosatetraenoyl)-sn-glycero-3-phosphocholine + (5Z,8Z,11Z,14Z)-eicosatetraenoate + H(+). The enzyme catalyses 1-octadecanoyl-2-(5Z,8Z,11Z,14Z-eicosatetraenoyl)-sn-glycero-3-phosphocholine + H2O = 1-octadecanoyl-sn-glycero-3-phosphocholine + (5Z,8Z,11Z,14Z)-eicosatetraenoate + H(+). The catalysed reaction is 1-hexadecanoyl-2-(9Z,12Z-octadecadienoyl)-sn-glycero-3-phosphocholine + H2O = (9Z,12Z)-octadecadienoate + 1-hexadecanoyl-sn-glycero-3-phosphocholine + H(+). It catalyses the reaction 1-octadecanoyl-2-(9Z,12Z,15Z-octadecatrienoyl)-sn-glycero-3-phosphocholine + H2O = (9Z,12Z,15Z)-octadecatrienoate + 1-octadecanoyl-sn-glycero-3-phosphocholine + H(+). It carries out the reaction 1-(5Z,8Z,11Z,14Z-eicosatetraenoyl)-2-hexadecanoyl-sn-glycero-3-phosphocholine + H2O = 1-(5Z,8Z,11Z,14Z-eicosatetraenoyl)-sn-glycero-3-phosphocholine + hexadecanoate + H(+). The enzyme catalyses 1-O-hexadecyl-2-(5Z,8Z,11Z,14Z)-eicosatetraenoyl-sn-glycero-3-phosphocholine + H2O = 1-O-hexadecyl-sn-glycero-3-phosphocholine + (5Z,8Z,11Z,14Z)-eicosatetraenoate + H(+). The catalysed reaction is 1,2-di-(9Z-octadecenoyl)-sn-glycero-3-phospho-(1'-sn-glycerol) + H2O = 1-(9Z-octadecenoyl)-sn-glycero-3-phospho-(1'-sn-glycerol) + (9Z)-octadecenoate + H(+). It catalyses the reaction 1-octadecanoyl-2-(5Z,8Z,11Z,14Z-eicosatetraenoyl)-sn-glycero-3-phosphate + H2O = 1-octadecanoyl-sn-glycero-3-phosphate + (5Z,8Z,11Z,14Z)-eicosatetraenoate + H(+). It carries out the reaction 1-hexadecanoyl-sn-glycero-3-phosphocholine + H2O = sn-glycerol 3-phosphocholine + hexadecanoate + H(+). The enzyme catalyses 2-(prostaglandin E2)-sn-glycero-3-phosphoethanolamine + H2O = sn-glycero-3-phosphoethanolamine + prostaglandin E2 + H(+). The catalysed reaction is 2-[(15S)-hydroxy-(5Z,8Z,11Z,13E)-eicosatetraenoyl]-sn-glycero-3-phosphocholine + H2O = (15S)-hydroxy-(5Z,8Z,11Z,13E)-eicosatetraenoate + sn-glycerol 3-phosphocholine + H(+). It catalyses the reaction 2-[(15R)-hydroxy-(5Z,8Z,11Z,13E)-eicosatetraenoyl]-sn-glycero-3-phosphocholine + H2O = (15R)-hydroxy-(5Z,8Z,11Z,13E)-eicosatetraenoate + sn-glycerol 3-phosphocholine + H(+). It carries out the reaction 2-(prostaglandin E2)-sn-glycero-3-phosphocholine + H2O = prostaglandin E2 + sn-glycerol 3-phosphocholine + H(+). The enzyme catalyses 2-[(11R)-hydroxy-(5Z,8Z,12E,14Z)-eicosatetraenoyl]-sn-glycero-3-phosphocholine + H2O = (11R)-hydroxy-(5Z,8Z,12E,14Z)-eicosatetraenoate + sn-glycerol 3-phosphocholine + H(+). The catalysed reaction is 1-(5Z,8Z,11Z,14Z-eicosatetraenoyl)-2-O-hexadecyl-sn-glycero-3-phosphocholine + H2O = 2-O-hexadecyl-sn-glycero-3-phosphocholine + (5Z,8Z,11Z,14Z)-eicosatetraenoate + H(+). It catalyses the reaction 1-octadecanoyl-2-(5Z,8Z,11Z,14Z-eicosatetraenoyl)-sn-glycero-3-phosphocholine + glycerol = 1-(5Z,8Z,11Z,14Z-eicosatetraenoyl)-glycerol + 1-octadecanoyl-sn-glycero-3-phosphocholine. It carries out the reaction 1-octadecanoyl-2-(9Z,12Z,15Z-octadecatrienoyl)-sn-glycero-3-phosphocholine + glycerol = 1-(9Z,12Z,15Z-octadecatrienoyl)-glycerol + 1-octadecanoyl-sn-glycero-3-phosphocholine. It participates in membrane lipid metabolism; glycerophospholipid metabolism. The protein operates within lipid metabolism; arachidonate metabolism. It functions in the pathway lipid metabolism; prostaglandin biosynthesis. Its pathway is lipid metabolism; leukotriene B4 biosynthesis. With respect to regulation, activated by cytosolic calcium, which is necessary for binding to membrane lipids. Activated by phosphorylation in response to mitogenic stimuli. Its function is as follows. Has primarily calcium-dependent phospholipase and lysophospholipase activities, with a major role in membrane lipid remodeling and biosynthesis of lipid mediators of the inflammatory response. Plays an important role in embryo implantation and parturition through its ability to trigger prostanoid production. Preferentially hydrolyzes the ester bond of the fatty acyl group attached at sn-2 position of phospholipids (phospholipase A2 activity). Selectively hydrolyzes sn-2 arachidonoyl group from membrane phospholipids, providing the precursor for eicosanoid biosynthesis via the cyclooxygenase pathway. In an alternative pathway of eicosanoid biosynthesis, hydrolyzes sn-2 fatty acyl chain of eicosanoid lysophopholipids to release free bioactive eicosanoids. Hydrolyzes the ester bond of the fatty acyl group attached at sn-1 position of phospholipids (phospholipase A1 activity) only if an ether linkage rather than an ester linkage is present at the sn-2 position. This hydrolysis is not stereospecific. Has calcium-independent phospholipase A2 and lysophospholipase activities in the presence of phosphoinositides. Has O-acyltransferase activity. Catalyzes the transfer of fatty acyl chains from phospholipids to a primary hydroxyl group of glycerol (sn-1 or sn-3), potentially contributing to monoacylglycerol synthesis. The polypeptide is Cytosolic phospholipase A2 (PLA2G4A) (Equus caballus (Horse)).